The sequence spans 977 residues: Poly(ADP-ribose) glycohydrolase (977 aa).

The disordered stretch occupies residues Met-1 to Ser-69. The interval Met-1–Thr-457 is A-domain. The Nuclear localization signal signature appears at Cys-10 to Trp-16. The segment covering Asp-17–Ala-29 has biased composition (low complexity). At Ser-69 the chain carries Phosphoserine. Positions Gln-77–Met-84 match the PIP-box (PCNA interacting peptide) motif. Phosphoserine occurs at positions 138 and 198. Residues Ser-184–Lys-407 form a disordered region. 2 stretches are compositionally biased toward basic and acidic residues: residues Ser-192–Asp-207 and Thr-223–Ser-234. Thr-200 bears the Phosphothreonine mark. Phosphoserine is present on residues Ser-262, Ser-265, Ser-287, Ser-292, Ser-299, Ser-303, and Ser-317. The segment covering Asn-280–Asn-291 has biased composition (polar residues). Residues Ser-317–Asp-332 show a composition bias toward acidic residues. A compositionally biased stretch (polar residues) spans Ser-333–Ser-343. Lys-341 is subject to N6-acetyllysine. A compositionally biased stretch (basic and acidic residues) spans Gln-346 to Lys-356. Ser-449 bears the Phosphoserine mark. The interval Gln-611–Tyr-796 is catalytic. Ile-727–Glu-728 lines the substrate pocket. Asp-738 is a catalytic residue. Residues Asn-741 and Gln-755 each coordinate substrate. Residues Glu-756 and Glu-757 contribute to the active site. Residues Tyr-796 and Asn-870–Ala-875 contribute to the substrate site.

Belongs to the poly(ADP-ribose) glycohydrolase family. As to quaternary structure, interacts with PCNA. Interacts with NUDT5.

It is found in the nucleus. The catalysed reaction is [(1''-&gt;2')-ADP-alpha-D-ribose](n) + H2O = [(1''-&gt;2')-ADP-alpha-D-ribose](n-1) + ADP-D-ribose. Poly(ADP-ribose) glycohydrolase that degrades poly(ADP-ribose) by hydrolyzing the ribose-ribose bonds present in poly(ADP-ribose). PARG acts both as an endo- and exoglycosidase, releasing poly(ADP-ribose) of different length as well as ADP-ribose monomers. It is however unable to cleave the ester bond between the terminal ADP-ribose and ADP-ribosylated residues, leaving proteins that are mono-ADP-ribosylated. Poly(ADP-ribose) is synthesized after DNA damage is only present transiently and is rapidly degraded by PARG. Required to prevent detrimental accumulation of poly(ADP-ribose) upon prolonged replicative stress, while it is not required for recovery from transient replicative stress. Responsible for the prevalence of mono-ADP-ribosylated proteins in cells, thanks to its ability to degrade poly(ADP-ribose) without cleaving the terminal protein-ribose bond. Required for retinoid acid-dependent gene transactivation, probably by removing poly(ADP-ribose) from histone demethylase KDM4D, allowing chromatin derepression at RAR-dependent gene promoters. Involved in the synthesis of ATP in the nucleus, together with PARP1, NMNAT1 and NUDT5. Nuclear ATP generation is required for extensive chromatin remodeling events that are energy-consuming. This Bos taurus (Bovine) protein is Poly(ADP-ribose) glycohydrolase.